We begin with the raw amino-acid sequence, 297 residues long: 4-hydroxy-tetrahydrodipicolinate synthase (297 aa).

Residue threonine 47 coordinates pyruvate. Residue tyrosine 135 is the Proton donor/acceptor of the active site. Lysine 163 serves as the catalytic Schiff-base intermediate with substrate. Position 205 (isoleucine 205) interacts with pyruvate.

The protein belongs to the DapA family. In terms of assembly, homotetramer; dimer of dimers.

The protein resides in the cytoplasm. The enzyme catalyses L-aspartate 4-semialdehyde + pyruvate = (2S,4S)-4-hydroxy-2,3,4,5-tetrahydrodipicolinate + H2O + H(+). It participates in amino-acid biosynthesis; L-lysine biosynthesis via DAP pathway; (S)-tetrahydrodipicolinate from L-aspartate: step 3/4. Its function is as follows. Catalyzes the condensation of (S)-aspartate-beta-semialdehyde [(S)-ASA] and pyruvate to 4-hydroxy-tetrahydrodipicolinate (HTPA). The sequence is that of 4-hydroxy-tetrahydrodipicolinate synthase from Cytophaga hutchinsonii (strain ATCC 33406 / DSM 1761 / CIP 103989 / NBRC 15051 / NCIMB 9469 / D465).